The chain runs to 299 residues: Protoheme IX farnesyltransferase (299 aa).

A run of 8 helical transmembrane segments spans residues 24–44, 46–66, 94–114, 118–138, 146–166, 172–192, 232–252, and 278–298; these read VVALMMLTAVVGMLLASDQGM, WNALILGNLGIALLASSAAAI, VHALTFAFSLAVVGMAILAWG, LTAWLTLASLIGYAVVYTLFL, IVLGGLAGAAPPLLGWTSVTG, ALLLVLIIFAWTPPHFWALAV, LPFITGMCGWIYFVAALALGV, and ITYLMLLFVALLADHYIPVTL.

It belongs to the UbiA prenyltransferase family. Protoheme IX farnesyltransferase subfamily.

Its subcellular location is the cell inner membrane. It carries out the reaction heme b + (2E,6E)-farnesyl diphosphate + H2O = Fe(II)-heme o + diphosphate. It functions in the pathway porphyrin-containing compound metabolism; heme O biosynthesis; heme O from protoheme: step 1/1. Its function is as follows. Converts heme B (protoheme IX) to heme O by substitution of the vinyl group on carbon 2 of heme B porphyrin ring with a hydroxyethyl farnesyl side group. The protein is Protoheme IX farnesyltransferase of Hahella chejuensis (strain KCTC 2396).